A 1222-amino-acid chain; its full sequence is Deubiquitinating protein VCPIP1 (1222 aa).

Residues Met-1–Pro-21 show a composition bias toward pro residues. The interval Met-1–Leu-36 is disordered. A compositionally biased stretch (low complexity) spans Ser-25–Leu-36. One can recognise an OTU domain in the interval Leu-208–Ile-361. Residue Asp-216 is part of the active site. Cys-219 (nucleophile) is an active-site residue. His-354 is a catalytic residue. Position 408 is an N6-acetyllysine (Lys-408). Disordered regions lie at residues Ser-725–Lys-776, Glu-989–Gly-1009, and Ala-1024–Ala-1074. 2 positions are modified to phosphoserine: Ser-747 and Ser-757. Positions Pro-755 to Thr-771 are enriched in low complexity. Thr-763 bears the Phosphothreonine mark. Phosphoserine is present on residues Ser-768, Ser-994, and Ser-998. The span at Leu-1041–Val-1050 shows a compositional bias: basic and acidic residues. Polar residues predominate over residues Gly-1057–Ala-1074. The residue at position 1077 (Ser-1077) is a Phosphoserine. 2 disordered regions span residues Val-1113–Thr-1175 and Ala-1188–Ser-1222. Over residues Val-1143 to Leu-1157 the composition is skewed to polar residues. A compositionally biased stretch (low complexity) spans Leu-1163–Thr-1175. Phosphoserine is present on Ser-1198. Acidic residues predominate over residues Glu-1200–Asp-1209. Residue Ser-1207 is modified to Phosphoserine; by ATM. Residues Ala-1210–Ser-1222 show a composition bias toward polar residues.

In terms of assembly, binds VCP and the ternary complex containing STX5A, NSFL1C and VCP. In terms of processing, phosphorylated at Ser-1207 by ATM or ATR following induction of covalent DNA-protein cross-links (DPCs).

It localises to the nucleus. The protein resides in the cytoplasm. The protein localises to the endoplasmic reticulum. Its subcellular location is the golgi apparatus. It is found in the golgi stack. It carries out the reaction Thiol-dependent hydrolysis of ester, thioester, amide, peptide and isopeptide bonds formed by the C-terminal Gly of ubiquitin (a 76-residue protein attached to proteins as an intracellular targeting signal).. In terms of biological role, deubiquitinating enzyme involved in DNA repair and reassembly of the Golgi apparatus and the endoplasmic reticulum following mitosis. Necessary for VCP-mediated reassembly of Golgi stacks after mitosis. Plays a role in VCP-mediated formation of transitional endoplasmic reticulum (tER). Mediates dissociation of the ternary complex containing STX5A, NSFL1C and VCP. Also involved in DNA repair following phosphorylation by ATM or ATR: acts by catalyzing deubiquitination of SPRTN, thereby promoting SPRTN recruitment to chromatin and subsequent proteolytic cleavage of covalent DNA-protein cross-links (DPCs). Hydrolyzes 'Lys-11'- and 'Lys-48'-linked polyubiquitin chains. (Microbial infection) Regulates the duration of C.botulinum neurotoxin type A (BoNT/A) intoxication by catalyzing deubiquitination of Botulinum neurotoxin A light chain (LC), thereby preventing LC degradation by the proteasome, and accelerating botulinum neurotoxin intoxication in patients. This Homo sapiens (Human) protein is Deubiquitinating protein VCPIP1.